The sequence spans 141 residues: Protein C19orf12 homolog (141 aa).

The chain crosses the membrane as a helical span at residues Gly37–Val57.

The protein belongs to the C19orf12 family.

It is found in the mitochondrion. It localises to the mitochondrion membrane. Its subcellular location is the endoplasmic reticulum. The protein localises to the cytoplasm. The protein resides in the cytosol. This chain is Protein C19orf12 homolog, found in Danio rerio (Zebrafish).